A 337-amino-acid chain; its full sequence is Nucleotide sugar transporter SLC35D2 (337 aa).

Residues 1-27 (MTAGGQAEAEGAGGEPGAARLPSRVAR) lie on the Cytoplasmic side of the membrane. A helical transmembrane segment spans residues 28–48 (LLSALFYGTCSFLIVLVNKAL). At 49–53 (LTTYG) the chain is on the extracellular side. A helical transmembrane segment spans residues 54 to 74 (FPSPIFLGIGQMAATIMILYV). Over 75 to 146 (SKLNKIIHFP…IILGKQYSLN (72 aa)) the chain is Cytoplasmic. The next 2 helical transmembrane spans lie at 147 to 167 (IILSVFAIILGAFIAAGSDLA) and 168 to 188 (FNLEGYIFVFLNDIFTAANGV). Topologically, residues 189–201 (YTKQKMDPKELGK) are cytoplasmic. A helical transmembrane segment spans residues 202–222 (YGVLFYNACFMIIPTLIISVS). Residues 223-237 (TGDLQQATEFNQWKN) lie on the Extracellular side of the membrane. Residues 238 to 258 (VVFILQFLLSCFLGFLLMYST) traverse the membrane as a helical segment. The Cytoplasmic portion of the chain corresponds to 259-265 (VLCSYYN). The helical transmembrane segment at 266 to 288 (SALTTAVVGAIKNVSVAYIGILI) threads the bilayer. The Extracellular segment spans residues 289–292 (GGDY). Residues 293–315 (IFSLLNFVGLNICMAGGLRYSFL) form a helical membrane-spanning segment. Residues 316 to 337 (TLSSQLKPKPVGEENICLDLKS) are Cytoplasmic-facing.

Belongs to the TPT transporter family. SLC35D subfamily. In terms of tissue distribution, highly expressed in heart, kidney, small intestine, placenta, lung and peripheral blood leukocyte. Weakly expressed in skeletal muscle and spleen. Not expressed in brain, colon and thymus.

It localises to the golgi apparatus membrane. It catalyses the reaction UMP(out) + UDP-N-acetyl-alpha-D-glucosamine(in) = UMP(in) + UDP-N-acetyl-alpha-D-glucosamine(out). The catalysed reaction is UMP(out) + UDP-alpha-D-glucose(in) = UMP(in) + UDP-alpha-D-glucose(out). Its function is as follows. Nucleotide sugar antiporter transporting UDP-N-acetylglucosamine (UDP-GlcNAc) and UDP-glucose (UDP-Glc) from the cytosol into the lumen of the Golgi in exchange of UMP. By supplying UDP-N-acetylglucosamine, a donor substrate to heparan sulfate synthases, probably takes part in the synthesis of these glycoconjugates. This Homo sapiens (Human) protein is Nucleotide sugar transporter SLC35D2.